We begin with the raw amino-acid sequence, 351 residues long: UDP-3-O-acylglucosamine N-acyltransferase (351 aa).

His240 (proton acceptor) is an active-site residue.

The protein belongs to the transferase hexapeptide repeat family. LpxD subfamily. Homotrimer.

It carries out the reaction a UDP-3-O-[(3R)-3-hydroxyacyl]-alpha-D-glucosamine + a (3R)-hydroxyacyl-[ACP] = a UDP-2-N,3-O-bis[(3R)-3-hydroxyacyl]-alpha-D-glucosamine + holo-[ACP] + H(+). The protein operates within bacterial outer membrane biogenesis; LPS lipid A biosynthesis. Catalyzes the N-acylation of UDP-3-O-acylglucosamine using 3-hydroxyacyl-ACP as the acyl donor. Is involved in the biosynthesis of lipid A, a phosphorylated glycolipid that anchors the lipopolysaccharide to the outer membrane of the cell. This Pseudomonas fluorescens (strain ATCC BAA-477 / NRRL B-23932 / Pf-5) protein is UDP-3-O-acylglucosamine N-acyltransferase.